A 160-amino-acid polypeptide reads, in one-letter code: Protein-export protein SecB (160 aa).

This sequence belongs to the SecB family. Homotetramer, a dimer of dimers. One homotetramer interacts with 1 SecA dimer.

It localises to the cytoplasm. Functionally, one of the proteins required for the normal export of preproteins out of the cell cytoplasm. It is a molecular chaperone that binds to a subset of precursor proteins, maintaining them in a translocation-competent state. It also specifically binds to its receptor SecA. The chain is Protein-export protein SecB from Rhizobium etli (strain ATCC 51251 / DSM 11541 / JCM 21823 / NBRC 15573 / CFN 42).